The chain runs to 389 residues: Multidrug resistance protein 1 (389 aa).

11 helical membrane passes run 6 to 26, 42 to 62, 71 to 91, 102 to 122, 134 to 154, 160 to 180, 202 to 222, 243 to 263, 286 to 306, 336 to 356, and 358 to 378; these read ITLTILLTNLFIAFLGIGLVI, AVGYMVACFAITQLIVSPIAG, KIMIVIGLLFFSVSEFLFGIG, MLGGISAAFIMPGVTAFIADI, YMSAAISTGFIIGPGIGGFLA, LPFFFAAAFALLAAILSILTL, IFAPMYFIAFLIILISSFGLA, IAIMITGGAIVGAITQVVLFD, VFLLTTVHSYVAILLVTVTVF, SMFTSIGNVFGPIIGGMLFDI, and VNYPFYFATVTLAIGIALTIA.

Belongs to the major facilitator superfamily. TCR/Tet family.

It localises to the cell membrane. Functionally, energy-dependent efflux pump responsible for decreased drug accumulation in multi-drug-resistant cells. Probably uses a transmembrane proton gradient as the energy source. Causes the efflux of a variety of toxic substances, including such structurally diverse compounds as ethidium bromide, rhodamine and acridine dyes, tetraphenylphosphonium, puromycin, chloramphenicol, doxorubicin, and fluoroquinolone antibiotics. This is Multidrug resistance protein 1 (bmr) from Bacillus subtilis (strain 168).